A 277-amino-acid chain; its full sequence is Exosome complex component Rrp42 (277 aa).

It belongs to the RNase PH family. Rrp42 subfamily. In terms of assembly, component of the archaeal exosome complex. Forms a hexameric ring-like arrangement composed of 3 Rrp41-Rrp42 heterodimers. The hexameric ring associates with a trimer of Rrp4 and/or Csl4 subunits.

The protein resides in the cytoplasm. Its function is as follows. Non-catalytic component of the exosome, which is a complex involved in RNA degradation. Contributes to the structuring of the Rrp41 active site. The polypeptide is Exosome complex component Rrp42 (Pyrococcus furiosus (strain ATCC 43587 / DSM 3638 / JCM 8422 / Vc1)).